Reading from the N-terminus, the 296-residue chain is Stanniocalcin-2 (296 aa).

A signal peptide spans 1–24; it reads MCAERLGQFVTLALVFATLDPAQG. The segment at 21–44 is disordered; the sequence is PAQGTDSTNPPEGPQDRSSQQKGR. Residues 24–44 show a composition bias toward polar residues; sequence GTDSTNPPEGPQDRSSQQKGR. N-linked (GlcNAc...) asparagine glycosylation is present at asparagine 73. The tract at residues 218–296 is disordered; the sequence is PPTAAPEHQP…EQSEYSDIRR (79 aa). A compositionally biased stretch (basic and acidic residues) spans 240 to 258; it reads RDTDHHLTANRGAKGERGS. A compositionally biased stretch (low complexity) spans 272–282; the sequence is GQSAQGPSGSS.

Belongs to the stanniocalcin family. Homodimer; disulfide-linked. Found in a variety of tissues including skeletal muscle, small intestine, kidney, liver and brain.

It is found in the secreted. Functionally, has an anti-hypocalcemic action on calcium and phosphate homeostasis. The chain is Stanniocalcin-2 (Stc2) from Mus musculus (Mouse).